Consider the following 84-residue polypeptide: Putative glutaredoxin MT3292 (84 aa).

One can recognise a Glutaredoxin domain in the interval 1 to 84 (MITAALTIYT…VKAKLVKIAG (84 aa)).

The polypeptide is Putative glutaredoxin MT3292 (Mycobacterium tuberculosis (strain CDC 1551 / Oshkosh)).